A 312-amino-acid chain; its full sequence is Telomere-binding protein OPG077 (312 aa).

It belongs to the orthopoxvirus OPG077 family.

The protein resides in the virion. Functionally, DNA-binding protein which binds to the hairpin form of the viral telomeric sequence. Required for the production of mature virions (MV). The protein is Telomere-binding protein OPG077 (OPG077) of Monkeypox virus.